We begin with the raw amino-acid sequence, 507 residues long: Glutamyl-tRNA(Gln) amidotransferase subunit A, mitochondrial (507 aa).

Residues threonine 29–glutamine 51 are disordered. The segment covering proline 31–serine 46 has biased composition (pro residues). Active-site charge relay system residues include lysine 57 and serine 135. The Acyl-ester intermediate role is filled by serine 159.

Belongs to the amidase family. GatA subfamily. In terms of assembly, subunit of the heterotrimeric GatCAB amidotransferase (AdT) complex, composed of A, B and C subunits.

It localises to the mitochondrion. The enzyme catalyses L-glutamyl-tRNA(Gln) + L-glutamine + ATP + H2O = L-glutaminyl-tRNA(Gln) + L-glutamate + ADP + phosphate + H(+). Allows the formation of correctly charged Gln-tRNA(Gln) through the transamidation of misacylated Glu-tRNA(Gln) in the mitochondria. The reaction takes place in the presence of glutamine and ATP through an activated gamma-phospho-Glu-tRNA(Gln). In Podospora anserina (strain S / ATCC MYA-4624 / DSM 980 / FGSC 10383) (Pleurage anserina), this protein is Glutamyl-tRNA(Gln) amidotransferase subunit A, mitochondrial.